The sequence spans 230 residues: MSNVVPTPVFPLFAQPFATRLERALQHLRIGRPVILMDDFDRENEADLIVAADKLTVPVMAQLIRDGSGIVCLCLPGETLDRLELPPMVDSNRSRYSTAFTVSIEAREGVTTGVSAVDRVTTIRAAIAPGARSGDVVSPGHVFPLRAQPGGVLTRRGHTEGSVDLAALAGLRPAGVLCELMNADGTMMRGASLERYAAKEGLVALAIDELAAHLQARGATGAPAELAVAA.

Residues arginine 42–glutamate 43, aspartate 47, arginine 155–threonine 159, and glutamate 179 contribute to the D-ribulose 5-phosphate site. A Mg(2+)-binding site is contributed by glutamate 43. Residue histidine 158 participates in Mg(2+) binding.

The protein belongs to the DHBP synthase family. Homodimer. Mg(2+) serves as cofactor. Requires Mn(2+) as cofactor.

It catalyses the reaction D-ribulose 5-phosphate = (2S)-2-hydroxy-3-oxobutyl phosphate + formate + H(+). Its pathway is cofactor biosynthesis; riboflavin biosynthesis; 2-hydroxy-3-oxobutyl phosphate from D-ribulose 5-phosphate: step 1/1. Catalyzes the conversion of D-ribulose 5-phosphate to formate and 3,4-dihydroxy-2-butanone 4-phosphate. The protein is 3,4-dihydroxy-2-butanone 4-phosphate synthase of Bordetella pertussis (strain Tohama I / ATCC BAA-589 / NCTC 13251).